The primary structure comprises 312 residues: Malate dehydrogenase (312 aa).

NAD(+) contacts are provided by residues 7 to 13 and aspartate 34; that span reads GAAGGIG. Residues arginine 81 and arginine 87 each contribute to the substrate site. NAD(+) contacts are provided by residues asparagine 94 and 117–119; that span reads ITN. The substrate site is built by asparagine 119 and arginine 153. Histidine 177 acts as the Proton acceptor in catalysis. Methionine 227 is an NAD(+) binding site.

It belongs to the LDH/MDH superfamily. MDH type 1 family. Homodimer.

It carries out the reaction (S)-malate + NAD(+) = oxaloacetate + NADH + H(+). Functionally, catalyzes the reversible oxidation of malate to oxaloacetate. The polypeptide is Malate dehydrogenase (Salmonella arizonae (strain ATCC BAA-731 / CDC346-86 / RSK2980)).